A 1434-amino-acid polypeptide reads, in one-letter code: Probable ATP-dependent RNA helicase spindle-E (1434 aa).

The Helicase ATP-binding domain occupies 125–292 (LAAINAHPVV…FTTTNSIPPV (168 aa)). Residue 138–145 (GETGCGKT) coordinates ATP. Residues 238–241 (DEVH) carry the DEAH box motif. The Helicase C-terminal domain maps to 354–526 (QSRQSYDEAL…NSVLKAKVLN (173 aa)). The 64-residue stretch at 938–1001 (ASAIAKGMMV…RLMPRELTEQ (64 aa)) folds into the Tudor domain.

The protein belongs to the DEAD box helicase family. DEAH subfamily.

It is found in the cytoplasm. It localises to the perinuclear region. The protein resides in the cytoplasmic ribonucleoprotein granule. It carries out the reaction ATP + H2O = ADP + phosphate + H(+). Its function is as follows. Probable ATP-binding RNA helicase which plays a central role during spermatogenesis and oogenesis by repressing transposable elements and preventing their mobilization, which is essential for the germline integrity. Acts via the piRNA metabolic process, which mediates the repression of transposable elements during meiosis by forming complexes composed of piRNAs and Piwi and govern the methylation and subsequent repression of transposons. Involved in the repression of LTR retrotransposon copia. Also involved in telomere regulation by repressing specialized telomeric retroelements HeT-A, TAHRE, and TART; Drosophila telomeres being maintained by transposition of specialized telomeric retroelements. Involved in telomeric trans-silencing, a repression mechanism by which a transposon or a transgene inserted in subtelomeric heterochromatin has the capacity to repress in trans in the female germline, a homologous transposon, or transgene located in euchromatin. Involved in the repression of testis-expressed Stellate genes by the homologous Su(Ste) repeats. Required for anteroposterior and dorsoventral axis formation during oogenesis. Key component of the perinuclear meiotic nuage, an electron dense structure involved in the post-transcriptional regulation of transposons and mRNAs; required for recruitment of other nuage comonents including vas, krimp, aub and mael. May have a role in production of piwi-interacting RNA (piRNA). The chain is Probable ATP-dependent RNA helicase spindle-E from Drosophila melanogaster (Fruit fly).